The primary structure comprises 984 residues: Putative formate dehydrogenase SAR2393 (984 aa).

The region spanning 3-79 (EHLVVTLDGK…PMTVNTVNND (77 aa)) is the 2Fe-2S ferredoxin-type domain. 4 residues coordinate [2Fe-2S] cluster: Cys37, Cys48, Cys51, and Cys63. In terms of domain architecture, 4Fe-4S His(Cys)3-ligated-type spans 79–119 (DVKDAQKEALDRILEKHMLYCTVCDYNNGDCEIHNTMDAWG). Positions 95, 99, 102, 109, 147, 150, 153, 157, 190, 193, 196, 200, 264, 267, 271, and 299 each coordinate [4Fe-4S] cluster. 4Fe-4S ferredoxin-type domains are found at residues 138–165 (PFYR…LNET) and 181–211 (NDVP…VNME). The formate dehydrogenase stretch occupies residues 252-984 (MRKERIKKTK…YVFPGNQVDK (733 aa)). The 4Fe-4S Mo/W bis-MGD-type domain maps to 257–313 (IKKTKTVCTYCGVGCSFEVWTKDREILKVQPSHDSPANKIATCVKGKFSWGHINSDQ).

It in the C-terminal section; belongs to the prokaryotic molybdopterin-containing oxidoreductase family. Requires [2Fe-2S] cluster as cofactor. The cofactor is [4Fe-4S] cluster. It depends on Mo-bis(molybdopterin guanine dinucleotide) as a cofactor.

It carries out the reaction formate + NAD(+) = CO2 + NADH. The sequence is that of Putative formate dehydrogenase SAR2393 from Staphylococcus aureus (strain MRSA252).